A 483-amino-acid polypeptide reads, in one-letter code: Glutamyl-tRNA(Gln) amidotransferase subunit A (483 aa).

Active-site charge relay system residues include Lys-77 and Ser-152. Ser-176 (acyl-ester intermediate) is an active-site residue.

This sequence belongs to the amidase family. GatA subfamily. As to quaternary structure, heterotrimer of A, B and C subunits.

The enzyme catalyses L-glutamyl-tRNA(Gln) + L-glutamine + ATP + H2O = L-glutaminyl-tRNA(Gln) + L-glutamate + ADP + phosphate + H(+). In terms of biological role, allows the formation of correctly charged Gln-tRNA(Gln) through the transamidation of misacylated Glu-tRNA(Gln) in organisms which lack glutaminyl-tRNA synthetase. The reaction takes place in the presence of glutamine and ATP through an activated gamma-phospho-Glu-tRNA(Gln). This Listeria monocytogenes serovar 1/2a (strain ATCC BAA-679 / EGD-e) protein is Glutamyl-tRNA(Gln) amidotransferase subunit A.